The following is a 629-amino-acid chain: MEVKTLDVANFLARIQKQESTFESLSKFSPTQLKELATCIRHRILEVVSSNGGHLSSTLGAVDLIIGMHLVFDANTNPFIFDVSHQAYAHKLLTGRWNDFSSLRQFGGLSGFCNPKESPSDYFIAGHSSTSISLAVGAAKALALKGSASMPVVMIGDGSMSAGLVYEALNELGDKKYPMVIILNDNKMSISKPIGAISNYLSQILTTSIYQKIRDTIKKVLTKMPDSATYLAKRFEESLKLITPGILFEELGLDYVGPIDGHNIELIIATLQRAKEMRKPVIIHAQTLKGKGYEIAEGRFEHWHGVGPFDVSTGSSLKSSAPQSPTAVFSESLESYLTDEKVVGVTAAMPSGTGLDKLIEKYPQRFWDVAICEAHAVTSMAAIAKEGFKPFVAIYSTFLQRAYDQIIHDVGILGLPVRFCIDRAGIVGEDGETHQGLFDIAYLRSIPHMVLFAPRDNASLQQAVAFAYRYNDSPCAFRYPRGSFTLEEGVFVSNEFVLGQAEMLKRGKKILLVGYGNGVGRAYKVYQALITEGYEPSLLDLRFVKPLDKHMLNEVFKTHTHICVFSDSYYMGGVASALLEFMAEENIKDVQLKSFEIKDRFVPHGNTALIEQSLGLDTPHLVSKIKEWI.

Thiamine diphosphate is bound by residues His-85 and 126 to 128 (GHS). Residue Asp-157 participates in Mg(2+) binding. Thiamine diphosphate is bound by residues 158–159 (GS), Asn-186, Tyr-293, and Glu-373. Asn-186 is a Mg(2+) binding site.

The protein belongs to the transketolase family. DXPS subfamily. In terms of assembly, homodimer. Mg(2+) is required as a cofactor. It depends on thiamine diphosphate as a cofactor.

The catalysed reaction is D-glyceraldehyde 3-phosphate + pyruvate + H(+) = 1-deoxy-D-xylulose 5-phosphate + CO2. The protein operates within metabolic intermediate biosynthesis; 1-deoxy-D-xylulose 5-phosphate biosynthesis; 1-deoxy-D-xylulose 5-phosphate from D-glyceraldehyde 3-phosphate and pyruvate: step 1/1. In terms of biological role, catalyzes the acyloin condensation reaction between C atoms 2 and 3 of pyruvate and glyceraldehyde 3-phosphate to yield 1-deoxy-D-xylulose-5-phosphate (DXP). In Helicobacter hepaticus (strain ATCC 51449 / 3B1), this protein is 1-deoxy-D-xylulose-5-phosphate synthase.